A 207-amino-acid chain; its full sequence is Thiamine-phosphate synthase (207 aa).

4-amino-2-methyl-5-(diphosphooxymethyl)pyrimidine-binding positions include 36-40 and Asn68; that span reads QLRMK. Mg(2+)-binding residues include Asp69 and Asp88. Ser106 serves as a coordination point for 4-amino-2-methyl-5-(diphosphooxymethyl)pyrimidine. Position 132 to 134 (132 to 134) interacts with 2-[(2R,5Z)-2-carboxy-4-methylthiazol-5(2H)-ylidene]ethyl phosphate; sequence TNT. Lys135 provides a ligand contact to 4-amino-2-methyl-5-(diphosphooxymethyl)pyrimidine. 2-[(2R,5Z)-2-carboxy-4-methylthiazol-5(2H)-ylidene]ethyl phosphate is bound by residues Gly162 and 182–183; that span reads VS.

Belongs to the thiamine-phosphate synthase family. Mg(2+) serves as cofactor.

The enzyme catalyses 2-[(2R,5Z)-2-carboxy-4-methylthiazol-5(2H)-ylidene]ethyl phosphate + 4-amino-2-methyl-5-(diphosphooxymethyl)pyrimidine + 2 H(+) = thiamine phosphate + CO2 + diphosphate. It catalyses the reaction 2-(2-carboxy-4-methylthiazol-5-yl)ethyl phosphate + 4-amino-2-methyl-5-(diphosphooxymethyl)pyrimidine + 2 H(+) = thiamine phosphate + CO2 + diphosphate. It carries out the reaction 4-methyl-5-(2-phosphooxyethyl)-thiazole + 4-amino-2-methyl-5-(diphosphooxymethyl)pyrimidine + H(+) = thiamine phosphate + diphosphate. Its pathway is cofactor biosynthesis; thiamine diphosphate biosynthesis; thiamine phosphate from 4-amino-2-methyl-5-diphosphomethylpyrimidine and 4-methyl-5-(2-phosphoethyl)-thiazole: step 1/1. In terms of biological role, condenses 4-methyl-5-(beta-hydroxyethyl)thiazole monophosphate (THZ-P) and 2-methyl-4-amino-5-hydroxymethyl pyrimidine pyrophosphate (HMP-PP) to form thiamine monophosphate (TMP). This is Thiamine-phosphate synthase from Methanococcus maripaludis (strain C5 / ATCC BAA-1333).